The following is a 287-amino-acid chain: Aromatic amino acid exporter YddG (287 aa).

Over 1-5 (MSRSS) the chain is Cytoplasmic. A helical membrane pass occupies residues 6–24 (ATLIGFTAILLWSTLALAT). Residues 7-136 (TLIGFTAILL…MGLAGTVVLL (130 aa)) enclose the EamA 1 domain. The Periplasmic portion of the chain corresponds to 25–31 (SSTGAVP). Residues 32–54 (PFLLTALTFTIGGAVGIAAGLAR) traverse the membrane as a helical segment. Topologically, residues 55–65 (GVGLSVLRQPW) are cytoplasmic. Residues 66–86 (PVWVHGIGGLFGYHFFYFSAL) form a helical membrane-spanning segment. The Periplasmic segment spans residues 87–90 (KLAP). Residues 91–111 (PAEAGLVAYLWPLLIVLFSAF) form a helical membrane-spanning segment. Residues 112–118 (LPGERLR) are Cytoplasmic-facing. The chain crosses the membrane as a helical span at residues 119–139 (PAHVAGALMGLAGTVVLLGAR). The Periplasmic portion of the chain corresponds to 140–149 (AGGFGFAPEY). The helical transmembrane segment at 150–170 (VPGYLAAAACAVIWSVYSVAS) threads the bilayer. One can recognise an EamA 2 domain in the interval 151-281 (PGYLAAAACA…ALIVGGAAVA (131 aa)). Topologically, residues 171–176 (RRFARV) are cytoplasmic. The helical transmembrane segment at 177 to 198 (PTEVVAGFCLATAALSALCHIL) threads the bilayer. Residues 199 to 208 (FEPSVWPVGS) are Periplasmic-facing. The helical transmembrane segment at 209–233 (EWLAVVALGIGPVGIAFYTWDIGMK) threads the bilayer. Over 234–236 (RGD) the chain is Cytoplasmic. The helical transmembrane segment at 237–258 (VRLLGVLSYAAPVLSTLLLVVA) threads the bilayer. Residues 259 to 264 (GFAAPS) are Periplasmic-facing. Residues 265-284 (GALAIACALIVGGAAVATLL) form a helical membrane-spanning segment. At 285–287 (ARR) the chain is on the cytoplasmic side.

Belongs to the drug/metabolite transporter (DMT) superfamily. Aromatic amino acid/paraquat exporter (ArAA/P-E) (TC 2.A.7.17) family.

It localises to the cell inner membrane. The enzyme catalyses L-threonine(in) = L-threonine(out). It carries out the reaction L-methionine(in) = L-methionine(out). The catalysed reaction is L-lysine(in) = L-lysine(out). It catalyses the reaction L-glutamate(out) = L-glutamate(in). In terms of biological role, amino acid transporter with broad substrate specificity. Can transport various amino acids, including L-threonine, L-methionine, L-lysine and L-glutamate. The chain is Aromatic amino acid exporter YddG from Ancylobacter novellus (strain ATCC 8093 / DSM 506 / JCM 20403 / CCM 1077 / IAM 12100 / NBRC 12443 / NCIMB 10456) (Starkeya novella).